The primary structure comprises 355 residues: UDP-N-acetylglucosamine--N-acetylmuramyl-(pentapeptide) pyrophosphoryl-undecaprenol N-acetylglucosamine transferase (355 aa).

UDP-N-acetyl-alpha-D-glucosamine is bound by residues 15 to 17 (TGG), Asn127, Arg163, Ser191, Ile244, 263 to 268 (ALTVSE), and Gln288.

This sequence belongs to the glycosyltransferase 28 family. MurG subfamily.

The protein resides in the cell inner membrane. It catalyses the reaction di-trans,octa-cis-undecaprenyl diphospho-N-acetyl-alpha-D-muramoyl-L-alanyl-D-glutamyl-meso-2,6-diaminopimeloyl-D-alanyl-D-alanine + UDP-N-acetyl-alpha-D-glucosamine = di-trans,octa-cis-undecaprenyl diphospho-[N-acetyl-alpha-D-glucosaminyl-(1-&gt;4)]-N-acetyl-alpha-D-muramoyl-L-alanyl-D-glutamyl-meso-2,6-diaminopimeloyl-D-alanyl-D-alanine + UDP + H(+). It participates in cell wall biogenesis; peptidoglycan biosynthesis. Cell wall formation. Catalyzes the transfer of a GlcNAc subunit on undecaprenyl-pyrophosphoryl-MurNAc-pentapeptide (lipid intermediate I) to form undecaprenyl-pyrophosphoryl-MurNAc-(pentapeptide)GlcNAc (lipid intermediate II). The protein is UDP-N-acetylglucosamine--N-acetylmuramyl-(pentapeptide) pyrophosphoryl-undecaprenol N-acetylglucosamine transferase of Salmonella dublin (strain CT_02021853).